Reading from the N-terminus, the 146-residue chain is Ribonuclease P protein component (146 aa).

This sequence belongs to the RnpA family. Consists of a catalytic RNA component (M1 or rnpB) and a protein subunit.

The enzyme catalyses Endonucleolytic cleavage of RNA, removing 5'-extranucleotides from tRNA precursor.. In terms of biological role, RNaseP catalyzes the removal of the 5'-leader sequence from pre-tRNA to produce the mature 5'-terminus. It can also cleave other RNA substrates such as 4.5S RNA. The protein component plays an auxiliary but essential role in vivo by binding to the 5'-leader sequence and broadening the substrate specificity of the ribozyme. The chain is Ribonuclease P protein component from Helicobacter hepaticus (strain ATCC 51449 / 3B1).